The sequence spans 89 residues: Small ribosomal subunit protein uS15 (89 aa).

Belongs to the universal ribosomal protein uS15 family. As to quaternary structure, part of the 30S ribosomal subunit. Forms a bridge to the 50S subunit in the 70S ribosome, contacting the 23S rRNA.

Functionally, one of the primary rRNA binding proteins, it binds directly to 16S rRNA where it helps nucleate assembly of the platform of the 30S subunit by binding and bridging several RNA helices of the 16S rRNA. In terms of biological role, forms an intersubunit bridge (bridge B4) with the 23S rRNA of the 50S subunit in the ribosome. In Mycobacterium bovis (strain ATCC BAA-935 / AF2122/97), this protein is Small ribosomal subunit protein uS15.